The primary structure comprises 181 residues: Inner membrane-spanning protein YciB (181 aa).

5 consecutive transmembrane segments (helical) span residues 10–30, 50–70, 80–100, 118–138, and 148–168; these read LVIFFAVYKFFDIYIASGALI, MHLITFAMVSVFGSLTLILHD, IVYALFAIALAVSQFMNKPIL, VTWYWVLFFVVCGLVNIYVAF, and FKVFGLTALTLINTVLTVFYL.

It belongs to the YciB family.

It localises to the cell inner membrane. Plays a role in cell envelope biogenesis, maintenance of cell envelope integrity and membrane homeostasis. The polypeptide is Inner membrane-spanning protein YciB (Shewanella piezotolerans (strain WP3 / JCM 13877)).